Reading from the N-terminus, the 82-residue chain is Cobrotoxin-b (82 aa).

The signal sequence occupies residues 1 to 21 (MKTLLLTLLVVTIVCLDLGYT). Disulfide bonds link cysteine 24-cysteine 44, cysteine 38-cysteine 61, cysteine 63-cysteine 74, and cysteine 75-cysteine 80.

This sequence belongs to the three-finger toxin family. Short-chain subfamily. Type I alpha-neurotoxin sub-subfamily. In terms of tissue distribution, expressed by the venom gland.

It localises to the secreted. Functionally, binds to muscle nicotinic acetylcholine receptor (nAChR) and inhibit acetylcholine from binding to the receptor, thereby impairing neuromuscular transmission. Produces peripheral paralysis by blocking neuromuscular transmission at the postsynaptic site. Has a lower toxicity than cobrotoxin. The protein is Cobrotoxin-b of Naja atra (Chinese cobra).